Reading from the N-terminus, the 467-residue chain is Chromosomal replication initiator protein DnaA (467 aa).

The domain I, interacts with DnaA modulators stretch occupies residues 1-90 (MSLSLWQQCL…KPVTQTPQAA (90 aa)). Residues 91–130 (VTSNVAAPAQVAQTQPQRAAPSTRSGWDNVPAPAEPTYRS) are domain II. Residues 98-111 (PAQVAQTQPQRAAP) show a composition bias toward low complexity. The interval 98–119 (PAQVAQTQPQRAAPSTRSGWDN) is disordered. Positions 131 to 347 (NVNVKHTFDN…GALNRVIANA (217 aa)) are domain III, AAA+ region. ATP is bound by residues Gly-175, Gly-177, Lys-178, and Thr-179. A domain IV, binds dsDNA region spans residues 348 to 467 (NFTGRAITID…FSNLIRTLSS (120 aa)).

Belongs to the DnaA family. In terms of assembly, oligomerizes as a right-handed, spiral filament on DNA at oriC.

The protein localises to the cytoplasm. Plays an essential role in the initiation and regulation of chromosomal replication. ATP-DnaA binds to the origin of replication (oriC) to initiate formation of the DNA replication initiation complex once per cell cycle. Binds the DnaA box (a 9 base pair repeat at the origin) and separates the double-stranded (ds)DNA. Forms a right-handed helical filament on oriC DNA; dsDNA binds to the exterior of the filament while single-stranded (ss)DNA is stabiized in the filament's interior. The ATP-DnaA-oriC complex binds and stabilizes one strand of the AT-rich DNA unwinding element (DUE), permitting loading of DNA polymerase. After initiation quickly degrades to an ADP-DnaA complex that is not apt for DNA replication. Binds acidic phospholipids. The sequence is that of Chromosomal replication initiator protein DnaA from Shigella boydii serotype 4 (strain Sb227).